The sequence spans 171 residues: Cyclin-dependent kinase inhibitor 2A (171 aa).

Basic and acidic residues predominate over residues 33–42 (ASMHTKHESE). The tract at residues 33–52 (ASMHTKHESEESFSGEKLTE) is disordered. ANK repeat units follow at residues 45–74 (FSGEKLTEAAARGRTEVVTELLELGTNPNA), 78–106 (FGRSAIQVMMMGNVRLAAILLQYGAEPNT), and 111–140 (TLTLPVHDAAREGFLDTLMLLHRAGARLDV).

It belongs to the CDKN2 cyclin-dependent kinase inhibitor family. Heterodimer with CDK4 or CDK6. Predominamt P16 complexes contained CDK6. Interacts with CDK4 (both 'T-172'-phosphorylated and non-phosphorylated forms); the interaction inhibits cyclin D-CDK4 kinase activity. Interacts with ISCO2. As to expression, expressed predominantly in lung and testis. In the testis, restricted to germ cells in the seminiferous epithelium. Not detected in premeiotic spermatogonia but high levels found in postmeiotic spermatids. In primary tumors, low levels detected in melanocytic hyperplasias. Higher levels found in non-metastatic and metastatic melanomas.

The protein localises to the cytoplasm. It localises to the nucleus. In terms of biological role, acts as a negative regulator of the proliferation of normal cells by interacting strongly with CDK4 and CDK6. This inhibits their ability to interact with cyclins D and to phosphorylate the retinoblastoma protein. This chain is Cyclin-dependent kinase inhibitor 2A, found in Monodelphis domestica (Gray short-tailed opossum).